The following is a 225-amino-acid chain: Methylthioribulose-1-phosphate dehydratase (225 aa).

2 residues coordinate Zn(2+): histidine 106 and histidine 108.

Belongs to the aldolase class II family. MtnB subfamily. It depends on Zn(2+) as a cofactor.

It carries out the reaction 5-(methylsulfanyl)-D-ribulose 1-phosphate = 5-methylsulfanyl-2,3-dioxopentyl phosphate + H2O. It participates in amino-acid biosynthesis; L-methionine biosynthesis via salvage pathway; L-methionine from S-methyl-5-thio-alpha-D-ribose 1-phosphate: step 2/6. Its function is as follows. Catalyzes the dehydration of methylthioribulose-1-phosphate (MTRu-1-P) into 2,3-diketo-5-methylthiopentyl-1-phosphate (DK-MTP-1-P). This Xanthomonas oryzae pv. oryzae (strain KACC10331 / KXO85) protein is Methylthioribulose-1-phosphate dehydratase.